We begin with the raw amino-acid sequence, 295 residues long: Small ribosomal subunit protein uS2 (295 aa).

Positions 242-295 are disordered; that stretch reads APVEPTLARELAPEAPAPEAPAEEAPAAEAAPAAEAAPAAEAAPAEASSEEQAG. Positions 264–288 are enriched in low complexity; it reads EEAPAAEAAPAAEAAPAAEAAPAEA.

Belongs to the universal ribosomal protein uS2 family.

The chain is Small ribosomal subunit protein uS2 from Phenylobacterium zucineum (strain HLK1).